A 374-amino-acid chain; its full sequence is 3-dehydroquinate synthase (374 aa).

This sequence belongs to the archaeal-type DHQ synthase family.

The enzyme catalyses 2-amino-2,3,7-trideoxy-D-lyxo-hept-6-ulosonate + NAD(+) + H2O = 3-dehydroquinate + NH4(+) + NADH + H(+). In terms of biological role, catalyzes the oxidative deamination and cyclization of 2-amino-3,7-dideoxy-D-threo-hept-6-ulosonic acid (ADH) to yield 3-dehydroquinate (DHQ), which is fed into the canonical shikimic pathway of aromatic amino acid biosynthesis. This chain is 3-dehydroquinate synthase, found in Methanocella arvoryzae (strain DSM 22066 / NBRC 105507 / MRE50).